The following is a 173-amino-acid chain: Small ribosomal subunit protein uS7 (173 aa).

This sequence belongs to the universal ribosomal protein uS7 family. As to quaternary structure, part of the 30S ribosomal subunit. Contacts proteins S9 and S11.

Its function is as follows. One of the primary rRNA binding proteins, it binds directly to 16S rRNA where it nucleates assembly of the head domain of the 30S subunit. Is located at the subunit interface close to the decoding center, probably blocks exit of the E-site tRNA. This Orientia tsutsugamushi (strain Boryong) (Rickettsia tsutsugamushi) protein is Small ribosomal subunit protein uS7.